Here is a 522-residue protein sequence, read N- to C-terminus: GMP synthase [glutamine-hydrolyzing] (522 aa).

One can recognise a Glutamine amidotransferase type-1 domain in the interval 8–204; sequence RLLIIDFGSQ…FVRLAGFKGD (197 aa). The active-site Nucleophile is cysteine 86. Catalysis depends on residues histidine 179 and glutamate 181. The GMPS ATP-PPase domain occupies 205 to 397; sequence WTMGAYREEA…LGLPASFIGR (193 aa). 232–238 lines the ATP pocket; that stretch reads SGGVDSS.

As to quaternary structure, homodimer.

The enzyme catalyses XMP + L-glutamine + ATP + H2O = GMP + L-glutamate + AMP + diphosphate + 2 H(+). Its pathway is purine metabolism; GMP biosynthesis; GMP from XMP (L-Gln route): step 1/1. Catalyzes the synthesis of GMP from XMP. The sequence is that of GMP synthase [glutamine-hydrolyzing] from Roseobacter denitrificans (strain ATCC 33942 / OCh 114) (Erythrobacter sp. (strain OCh 114)).